Here is a 468-residue protein sequence, read N- to C-terminus: Effector protein hopD2 (468 aa).

A compositionally biased stretch (polar residues) spans 1–20 (MNPLQPIQHSITNSQMSGGQ). The segment at 1–35 (MNPLQPIQHSITNSQMSGGQQLEAEGSQAHNSYSH) is disordered. A Tyrosine-protein phosphatase domain is found at 143 to 468 (DASSPPSAND…TQWRAKIALE (326 aa)). Cys378 acts as the Phosphocysteine intermediate in catalysis.

Interacts with EFR and FLS2 (via the kinase and cytoplasmic domains).

The protein resides in the secreted. The catalysed reaction is O-phospho-L-tyrosyl-[protein] + H2O = L-tyrosyl-[protein] + phosphate. With respect to regulation, inhibited by sodium orthovanadate. Its function is as follows. Effector showing tyrosine-phosphatase activity required for host defense suppression. Functions inside plant cells causing suppression of HR (hypersensitive response), PR1 gene expression and oxidative burst probably by interfering with a MAPK (mitogen-activated protein kinase) pathway. MAPK cascades are known to activate defense-related transcription factors. Inhibits plant pattern-recognition receptors (PRRs) activation. This is Effector protein hopD2 (hopD2) from Pseudomonas syringae pv. tomato (strain ATCC BAA-871 / DC3000).